Consider the following 332-residue polypeptide: Ribosomal RNA small subunit methyltransferase H (332 aa).

Residues 37–39 (GGY), D55, F82, D103, and Q110 each bind S-adenosyl-L-methionine. The disordered stretch occupies residues 281 to 332 (TKRPVTPSDEETAANPRARSAKLRAGERTAAPAQPEAPLPHWPTLASVMGRR).

It belongs to the methyltransferase superfamily. RsmH family.

It localises to the cytoplasm. It catalyses the reaction cytidine(1402) in 16S rRNA + S-adenosyl-L-methionine = N(4)-methylcytidine(1402) in 16S rRNA + S-adenosyl-L-homocysteine + H(+). Its function is as follows. Specifically methylates the N4 position of cytidine in position 1402 (C1402) of 16S rRNA. The chain is Ribosomal RNA small subunit methyltransferase H from Rhodopseudomonas palustris (strain BisA53).